The sequence spans 876 residues: Phosphoenolpyruvate carboxylase (876 aa).

Active-site residues include His138 and Lys543.

It belongs to the PEPCase type 1 family. Requires Mg(2+) as cofactor.

The catalysed reaction is oxaloacetate + phosphate = phosphoenolpyruvate + hydrogencarbonate. In terms of biological role, forms oxaloacetate, a four-carbon dicarboxylic acid source for the tricarboxylic acid cycle. The chain is Phosphoenolpyruvate carboxylase from Pseudomonas fluorescens (strain Pf0-1).